The primary structure comprises 370 residues: Small ribosomal subunit biogenesis GTPase RsgA (370 aa).

One can recognise a CP-type G domain in the interval 97 to 255 (QTQLDRPPIA…LADTPGFNQP (159 aa)). GTP is bound by residues 146-149 (NKSD) and 197-205 (GPSGVGKSS). Zn(2+) is bound by residues cysteine 280, cysteine 285, histidine 287, and cysteine 293. The tract at residues 328-370 (TLKLKTKGKGQSQYEPKLESKKYRRTSRRTQVQGLQDLYQEEE) is disordered.

It belongs to the TRAFAC class YlqF/YawG GTPase family. RsgA subfamily. As to quaternary structure, monomer. Associates with 30S ribosomal subunit, binds 16S rRNA. Requires Zn(2+) as cofactor.

The protein localises to the cytoplasm. In terms of biological role, one of several proteins that assist in the late maturation steps of the functional core of the 30S ribosomal subunit. Helps release RbfA from mature subunits. May play a role in the assembly of ribosomal proteins into the subunit. Circularly permuted GTPase that catalyzes slow GTP hydrolysis, GTPase activity is stimulated by the 30S ribosomal subunit. The polypeptide is Small ribosomal subunit biogenesis GTPase RsgA (Trichormus variabilis (strain ATCC 29413 / PCC 7937) (Anabaena variabilis)).